A 444-amino-acid chain; its full sequence is MVDHISPRASPGPIRSSQTRRARKLRDSCTSCASSKVRCTKEKPACARCIERGLACQYMVSKRMGRNPRAPSPLDSTRRPSESLPSARSEQGLPAHNTYSTPHAHTQAHTHAHSHPQPHPQSHPQSNQPPHALPTPNGSSSVSAIFSHQSPPPPVETQGLGGDLAGQEQSTLSSLTVDSEFGGSLQSMEHGNHVDFLAESTGSLFDAFLEVGTPMIDPFLESAPLPPFQARYCCFSLALQTLTHLFPHAPLGCQLRLTDGEDSSCNLMTTDMVISGNKRATDAVRKILGCSCAQDGYLLSMVVLIVLKVLAWYAAAAGTQCTSTAAGGETNSGSCSNSPATVSSGCLTEERVLHLPSMMGEDCVDEEDQPRVAAQLVLSELHRVQSLVNLLAKRLQEGGDDAAGIPAHHPASPFSLLGFSGLEANLRHRLRAVSSDIIDYLHRE.

The tract at residues 1–25 (MVDHISPRASPGPIRSSQTRRARKL) is disordered. Residues 29–56 (CTSCASSKVRCTKEKPACARCIERGLAC) constitute a DNA-binding region (zn(2)-C6 fungal-type). The segment at 64 to 174 (MGRNPRAPSP…AGQEQSTLSS (111 aa)) is disordered. A compositionally biased stretch (basic residues) spans 106–116 (TQAHTHAHSHP). The segment covering 120–130 (PQSHPQSNQPP) has biased composition (low complexity). Residues 136 to 149 (PNGSSSVSAIFSHQ) are compositionally biased toward polar residues.

Interacts with aflS.

The protein resides in the nucleus. Functionally, transcription factor; part of the gene cluster that mediates the biosynthesis of aflatoxin, a polyketide-derived furanocoumarin which is part of the most toxic and carcinogenic compounds among the known mycotoxins. Binds to at least 17 genes in the aflatoxin biosynthetic cluster, leading to the activation of an enzymatic cascade reaction that results in aflatoxin biosynthesis. Promoter regions of several biosynthesis genes are bound by aflR in a dimeric form with a 5'-TCG(N5)CGA-3' binding motif. AflR also recognizes 5'-TTAGGCCTAA-3' and 5'-TCGCAGCCCGG-3' binding sequences. AflR achieves its binding specificity through a mechanism in which either two copies of aflR or its complex with aflS bind to target sites on DNA in a highly cooperative manner. AflS acts as a modulator of aflR's DNA-binding by decreasing its DNA-binding affinity. In addition to aflatoxin biosynthesis, also plays a positive role in the fungal growth, spore germination, sclerotial development, and carbohydrate metabolism. The polypeptide is Aflatoxin biosynthesis regulatory protein (Aspergillus flavus (strain ATCC 200026 / FGSC A1120 / IAM 13836 / NRRL 3357 / JCM 12722 / SRRC 167)).